Reading from the N-terminus, the 376-residue chain is Phytanoyl-CoA hydroxylase-interacting protein-like (376 aa).

Residues 52–161 (VPHNIKISNI…EIIEFCTADY (110 aa)) enclose the Fibronectin type-III domain.

It belongs to the PHYHIP family.

Functionally, may play a role in the development of the central system. The chain is Phytanoyl-CoA hydroxylase-interacting protein-like (phyhipl) from Xenopus tropicalis (Western clawed frog).